The chain runs to 277 residues: 4-hydroxy-3-methylbut-2-enyl diphosphate reductase (277 aa).

Residue C12 participates in [4Fe-4S] cluster binding. H36 and H70 together coordinate (2E)-4-hydroxy-3-methylbut-2-enyl diphosphate. Residues H36 and H70 each coordinate dimethylallyl diphosphate. 2 residues coordinate isopentenyl diphosphate: H36 and H70. Residue C92 coordinates [4Fe-4S] cluster. (2E)-4-hydroxy-3-methylbut-2-enyl diphosphate is bound at residue H120. H120 serves as a coordination point for dimethylallyl diphosphate. Residue H120 participates in isopentenyl diphosphate binding. The active-site Proton donor is the E122. T160 is a binding site for (2E)-4-hydroxy-3-methylbut-2-enyl diphosphate. Residue C188 coordinates [4Fe-4S] cluster. Residues S216, S217, N218, and S260 each contribute to the (2E)-4-hydroxy-3-methylbut-2-enyl diphosphate site. Dimethylallyl diphosphate is bound by residues S216, S217, N218, and S260. Isopentenyl diphosphate is bound by residues S216, S217, N218, and S260.

It belongs to the IspH family. [4Fe-4S] cluster is required as a cofactor.

The enzyme catalyses isopentenyl diphosphate + 2 oxidized [2Fe-2S]-[ferredoxin] + H2O = (2E)-4-hydroxy-3-methylbut-2-enyl diphosphate + 2 reduced [2Fe-2S]-[ferredoxin] + 2 H(+). It catalyses the reaction dimethylallyl diphosphate + 2 oxidized [2Fe-2S]-[ferredoxin] + H2O = (2E)-4-hydroxy-3-methylbut-2-enyl diphosphate + 2 reduced [2Fe-2S]-[ferredoxin] + 2 H(+). The protein operates within isoprenoid biosynthesis; dimethylallyl diphosphate biosynthesis; dimethylallyl diphosphate from (2E)-4-hydroxy-3-methylbutenyl diphosphate: step 1/1. It functions in the pathway isoprenoid biosynthesis; isopentenyl diphosphate biosynthesis via DXP pathway; isopentenyl diphosphate from 1-deoxy-D-xylulose 5-phosphate: step 6/6. Functionally, catalyzes the conversion of 1-hydroxy-2-methyl-2-(E)-butenyl 4-diphosphate (HMBPP) into a mixture of isopentenyl diphosphate (IPP) and dimethylallyl diphosphate (DMAPP). Acts in the terminal step of the DOXP/MEP pathway for isoprenoid precursor biosynthesis. This chain is 4-hydroxy-3-methylbut-2-enyl diphosphate reductase, found in Sulfurovum sp. (strain NBC37-1).